A 609-amino-acid chain; its full sequence is (R)-linalool synthase TPS5, chloroplastic (609 aa).

The N-terminal 42 residues, 1–42 (MVSILSNIGMMVVTFKRPSLFTSLRRRSANNIIITKHSHPIS), are a transit peptide targeting the chloroplast. (2E)-geranyl diphosphate-binding residues include arginine 325, aspartate 362, aspartate 366, arginine 503, and aspartate 506. Residues aspartate 362 and aspartate 366 each contribute to the Mg(2+) site. The DDXXD motif signature appears at 362–366 (DDIYD). Residues aspartate 506, threonine 510, and glutamate 514 each contribute to the Mg(2+) site.

This sequence belongs to the terpene synthase family. Tpsb subfamily. Mg(2+) is required as a cofactor. Mn(2+) serves as cofactor. Highly expressed in young fruits and plant tops. Expressed in flower buds and trichomes of petioles and stems. Expressed at low levels in young leaves, stems, petioles, sepals and petals.

Its subcellular location is the plastid. It localises to the chloroplast. It catalyses the reaction (2E)-geranyl diphosphate + H2O = (R)-linalool + diphosphate. It carries out the reaction (2E,6E)-farnesyl diphosphate + H2O = (6E)-nerolidol + diphosphate. It participates in secondary metabolite biosynthesis; terpenoid biosynthesis. In terms of biological role, involved in monoterpene (C10) biosynthesis in glandular trichomes. Converts geranyl diphosphate to linalool in glandular trichomes in response to jasmonate (JA). Can convert farnesyl diphosphate to nerolidol in vitro. In Solanum lycopersicum (Tomato), this protein is (R)-linalool synthase TPS5, chloroplastic.